The following is a 170-amino-acid chain: dCTP pyrophosphatase 1 (170 aa).

The interval 1 to 27 (MSVAGGEIRGDTGGEDTAAPGRFSFSP) is disordered. An N-acetylserine modification is found at serine 2. Serine 2 bears the Phosphoserine mark. The residue at position 12 (threonine 12) is a Phosphothreonine. Substrate is bound by residues histidine 38 and 47 to 51 (WEQFH). Glutamate 63 and glutamate 66 together coordinate Mg(2+). Tryptophan 73 lines the substrate pocket. Position 85 is a phosphoserine (serine 85). 2 residues coordinate Mg(2+): glutamate 95 and aspartate 98. Tyrosine 102 provides a ligand contact to substrate. The interval 147–170 (GAISEDQAVGPADIPCDSTGQTST) is disordered.

As to quaternary structure, homotetramer. It depends on Mg(2+) as a cofactor.

It localises to the mitochondrion. The protein resides in the nucleus. The protein localises to the cytoplasm. It is found in the cytosol. The catalysed reaction is dCTP + H2O = dCMP + diphosphate + H(+). With respect to regulation, inhibited by the reaction end product PPi. Inhibited by dCDP. Inhibited by triptolide. Hydrolyzes deoxynucleoside triphosphates (dNTPs) to the corresponding nucleoside monophosphates. Has a strong preference for dCTP and its analogs including 5-iodo-dCTP and 5-methyl-dCTP for which it may even have a higher efficiency. May protect DNA or RNA against the incorporation of these genotoxic nucleotide analogs through their catabolism. The chain is dCTP pyrophosphatase 1 from Homo sapiens (Human).